We begin with the raw amino-acid sequence, 304 residues long: Phosphatidylserine decarboxylase proenzyme (304 aa).

Residues D90, H147, and S253 each act as charge relay system; for autoendoproteolytic cleavage activity in the active site. Residue S253 is the Schiff-base intermediate with substrate; via pyruvic acid; for decarboxylase activity of the active site. S253 carries the pyruvic acid (Ser); by autocatalysis modification.

The protein belongs to the phosphatidylserine decarboxylase family. PSD-B subfamily. Prokaryotic type I sub-subfamily. In terms of assembly, heterodimer of a large membrane-associated beta subunit and a small pyruvoyl-containing alpha subunit. The cofactor is pyruvate. Is synthesized initially as an inactive proenzyme. Formation of the active enzyme involves a self-maturation process in which the active site pyruvoyl group is generated from an internal serine residue via an autocatalytic post-translational modification. Two non-identical subunits are generated from the proenzyme in this reaction, and the pyruvate is formed at the N-terminus of the alpha chain, which is derived from the carboxyl end of the proenzyme. The autoendoproteolytic cleavage occurs by a canonical serine protease mechanism, in which the side chain hydroxyl group of the serine supplies its oxygen atom to form the C-terminus of the beta chain, while the remainder of the serine residue undergoes an oxidative deamination to produce ammonia and the pyruvoyl prosthetic group on the alpha chain. During this reaction, the Ser that is part of the protease active site of the proenzyme becomes the pyruvoyl prosthetic group, which constitutes an essential element of the active site of the mature decarboxylase.

Its subcellular location is the cell membrane. It catalyses the reaction a 1,2-diacyl-sn-glycero-3-phospho-L-serine + H(+) = a 1,2-diacyl-sn-glycero-3-phosphoethanolamine + CO2. It functions in the pathway phospholipid metabolism; phosphatidylethanolamine biosynthesis; phosphatidylethanolamine from CDP-diacylglycerol: step 2/2. In terms of biological role, catalyzes the formation of phosphatidylethanolamine (PtdEtn) from phosphatidylserine (PtdSer). This Dickeya dadantii (strain 3937) (Erwinia chrysanthemi (strain 3937)) protein is Phosphatidylserine decarboxylase proenzyme.